The sequence spans 147 residues: Large ribosomal subunit protein bL9 (147 aa).

It belongs to the bacterial ribosomal protein bL9 family.

Functionally, binds to the 23S rRNA. This chain is Large ribosomal subunit protein bL9, found in Campylobacter fetus subsp. fetus (strain 82-40).